Reading from the N-terminus, the 538-residue chain is Protein NRT1/ PTR FAMILY 5.11 (538 aa).

2 consecutive transmembrane segments (helical) span residues 44–64 (FAYF…LGES) and 74–94 (AWTG…DSYL). Residue threonine 99 is modified to Phosphothreonine. 10 consecutive transmembrane segments (helical) span residues 100 to 120 (IIIS…STMI), 134 to 154 (TIFF…NPCI), 175 to 194 (SFFN…TRLV), 204 to 224 (WSLG…LFLL), 308 to 328 (IPIW…PTFF), 342 to 362 (GLLV…VVFI), 389 to 409 (IGTG…VETK), 424 to 444 (VWWL…TMVG), 463 to 483 (ALNL…ISVI), and 507 to 527 (YFYW…LWFA).

The protein belongs to the major facilitator superfamily. Proton-dependent oligopeptide transporter (POT/PTR) (TC 2.A.17) family. Expressed in shoots and roots.

The protein localises to the membrane. The protein is Protein NRT1/ PTR FAMILY 5.11 (NPF5.11) of Arabidopsis thaliana (Mouse-ear cress).